Reading from the N-terminus, the 327-residue chain is 4-hydroxy-2-oxoglutarate aldolase, mitochondrial (327 aa).

A mitochondrion-targeting transit peptide spans 1–25 (MLGPQVWSSVRQGLSRSLSRNVGVW). 77–78 (SN) contacts substrate. Catalysis depends on K196, which acts as the Schiff-base intermediate with substrate. 2 residues coordinate substrate: S198 and G222.

This sequence belongs to the DapA family. In terms of assembly, homotetramer.

The protein localises to the mitochondrion. It carries out the reaction (4S)-4-hydroxy-2-oxoglutarate = glyoxylate + pyruvate. The catalysed reaction is (4R)-4-hydroxy-2-oxoglutarate = glyoxylate + pyruvate. With respect to regulation, inhibited by divalent cations. Functionally, catalyzes the final step in the metabolic pathway of hydroxyproline. In Homo sapiens (Human), this protein is 4-hydroxy-2-oxoglutarate aldolase, mitochondrial (HOGA1).